The chain runs to 514 residues: Type-2 serine--tRNA ligase (514 aa).

Alanine 313 is an L-serine binding site. A Zn(2+)-binding site is contributed by cysteine 315. Residue arginine 344 participates in L-serine binding. ATP is bound by residues 344-346 (RWE) and 355-356 (RV). 361–363 (RGE) lines the L-serine pocket. Glutamate 363 and cysteine 470 together coordinate Zn(2+). ATP is bound at residue arginine 477.

The protein belongs to the class-II aminoacyl-tRNA synthetase family. Type-2 seryl-tRNA synthetase subfamily. As to quaternary structure, homodimer. Zn(2+) serves as cofactor.

It localises to the cytoplasm. The catalysed reaction is tRNA(Ser) + L-serine + ATP = L-seryl-tRNA(Ser) + AMP + diphosphate + H(+). It catalyses the reaction tRNA(Sec) + L-serine + ATP = L-seryl-tRNA(Sec) + AMP + diphosphate + H(+). It functions in the pathway aminoacyl-tRNA biosynthesis; selenocysteinyl-tRNA(Sec) biosynthesis; L-seryl-tRNA(Sec) from L-serine and tRNA(Sec): step 1/1. Its function is as follows. Catalyzes the attachment of serine to tRNA(Ser). Is also able to aminoacylate tRNA(Sec) with serine, to form the misacylated tRNA L-seryl-tRNA(Sec), which will be further converted into selenocysteinyl-tRNA(Sec). The polypeptide is Type-2 serine--tRNA ligase (Methanococcus maripaludis (strain C7 / ATCC BAA-1331)).